A 1488-amino-acid chain; its full sequence is Chromosome partition protein MukB (1488 aa).

Residue 34 to 41 (GGNGAGKS) participates in ATP binding. Coiled-coil stretches lie at residues 326-418 (LEAD…QYNQ), 444-472 (LDTF…QTAH), and 509-602 (RHLA…QRAP). The flexible hinge stretch occupies residues 666 to 783 (PGGAEDQRLN…SLPIFGRAAR (118 aa)). Coiled-coil stretches lie at residues 835–923 (EAEI…AKLE), 977–1116 (EMLS…AKAG), and 1209–1265 (VEAI…LQSV). A disordered region spans residues 1049-1074 (ADSGAEERARQRRDELHAQLSNNRSR). The span at 1051–1065 (SGAEERARQRRDELH) shows a compositional bias: basic and acidic residues.

This sequence belongs to the SMC family. MukB subfamily. As to quaternary structure, homodimerization via its hinge domain. Binds to DNA via its C-terminal region. Interacts, and probably forms a ternary complex, with MukE and MukF via its C-terminal region. The complex formation is stimulated by calcium or magnesium. Interacts with tubulin-related protein FtsZ.

Its subcellular location is the cytoplasm. It is found in the nucleoid. Its function is as follows. Plays a central role in chromosome condensation, segregation and cell cycle progression. Functions as a homodimer, which is essential for chromosome partition. Involved in negative DNA supercoiling in vivo, and by this means organize and compact chromosomes. May achieve or facilitate chromosome segregation by condensation DNA from both sides of a centrally located replisome during cell division. The chain is Chromosome partition protein MukB from Salmonella schwarzengrund (strain CVM19633).